We begin with the raw amino-acid sequence, 511 residues long: Pancreatic alpha-amylase (511 aa).

Positions Met-1–Ala-15 are cleaved as a signal peptide. A Pyrrolidone carboxylic acid modification is found at Gln-16. Intrachain disulfides connect Cys-43/Cys-101, Cys-85/Cys-130, and Cys-156/Cys-175. Residues Asn-115, Arg-173, and Asp-182 each coordinate Ca(2+). Arg-210 contacts chloride. Asp-212 functions as the Nucleophile in the catalytic mechanism. His-216 provides a ligand contact to Ca(2+). The active-site Proton donor is Glu-248. Asn-313 and Arg-352 together coordinate chloride. Disulfide bonds link Cys-393-Cys-399 and Cys-465-Cys-477. Asn-476 carries N-linked (GlcNAc...) asparagine glycosylation.

The protein belongs to the glycosyl hydrolase 13 family. Monomer. Binds to the sea anemone inhibitor helianthamide. Ca(2+) is required as a cofactor. Requires chloride as cofactor. As to expression, detected in pancreas (at protein level).

The protein resides in the secreted. Its subcellular location is the extracellular space. The catalysed reaction is Endohydrolysis of (1-&gt;4)-alpha-D-glucosidic linkages in polysaccharides containing three or more (1-&gt;4)-alpha-linked D-glucose units.. The sequence is that of Pancreatic alpha-amylase (AMY2A) from Homo sapiens (Human).